A 143-amino-acid chain; its full sequence is Nucleoside diphosphate kinase (143 aa).

ATP is bound by residues Lys-11, Phe-59, Arg-87, Thr-93, Arg-104, and Asn-114. His-117 acts as the Pros-phosphohistidine intermediate in catalysis.

It belongs to the NDK family. As to quaternary structure, homotetramer. Requires Mg(2+) as cofactor.

The protein localises to the cytoplasm. The enzyme catalyses a 2'-deoxyribonucleoside 5'-diphosphate + ATP = a 2'-deoxyribonucleoside 5'-triphosphate + ADP. It catalyses the reaction a ribonucleoside 5'-diphosphate + ATP = a ribonucleoside 5'-triphosphate + ADP. Major role in the synthesis of nucleoside triphosphates other than ATP. The ATP gamma phosphate is transferred to the NDP beta phosphate via a ping-pong mechanism, using a phosphorylated active-site intermediate. This is Nucleoside diphosphate kinase from Shewanella amazonensis (strain ATCC BAA-1098 / SB2B).